A 555-amino-acid polypeptide reads, in one-letter code: Glucose-6-phosphate isomerase (555 aa).

E365 functions as the Proton donor in the catalytic mechanism. Residues H396 and K522 contribute to the active site.

The protein belongs to the GPI family.

The protein localises to the cytoplasm. The catalysed reaction is alpha-D-glucose 6-phosphate = beta-D-fructose 6-phosphate. It functions in the pathway carbohydrate biosynthesis; gluconeogenesis. The protein operates within carbohydrate degradation; glycolysis; D-glyceraldehyde 3-phosphate and glycerone phosphate from D-glucose: step 2/4. Catalyzes the reversible isomerization of glucose-6-phosphate to fructose-6-phosphate. The chain is Glucose-6-phosphate isomerase from Psychrobacter arcticus (strain DSM 17307 / VKM B-2377 / 273-4).